Here is a 1198-residue protein sequence, read N- to C-terminus: Phosphatidylinositol-3,5-bisphosphate 3-phosphatase MTMR3 (1198 aa).

Position 8 is a phosphoserine (S8). The region spanning 155-576 is the Myotubularin phosphatase domain; that stretch reads EHVTSRFKNE…RNLMLWSAVY (422 aa). A compositionally biased stretch (polar residues) spans 265 to 280; that stretch reads SRSSGSKLSTRNTSRD. The disordered stretch occupies residues 265 to 285; it reads SRSSGSKLSTRNTSRDFPNGG. A 1,2-diacyl-sn-glycero-3-phospho-(1D-myo-inositol-3,5-bisphosphate) contacts are provided by N326, N351, and I352. The a 1,2-diacyl-sn-glycero-3-phospho-(1D-myo-inositol-3-phosphate) site is built by N326, N351, and I352. C413 serves as the catalytic Phosphocysteine intermediate. Residues S414, D415, G416, W417, D418, R419, K455, and R459 each coordinate a 1,2-diacyl-sn-glycero-3-phospho-(1D-myo-inositol-3,5-bisphosphate). S414, D415, G416, W417, D418, and R419 together coordinate a 1,2-diacyl-sn-glycero-3-phospho-(1D-myo-inositol-3-phosphate). R459 serves as a coordination point for a 1,2-diacyl-sn-glycero-3-phospho-(1D-myo-inositol-3-phosphate). The segment at 590–612 is disordered; that stretch reads CAPYPAPGTSPDDPPLSRLPKTR. Residues 593 to 603 show a composition bias toward pro residues; the sequence is YPAPGTSPDDP. S613, S633, S647, and S651 each carry phosphoserine. Disordered regions lie at residues 650–669, 716–735, and 855–891; these read LSSL…LGKP, EGKE…PEAS, and KSVS…SLVE. The span at 716-732 shows a compositional bias: basic and acidic residues; that stretch reads EGKEDPLLEKESRRKTP. T731 bears the Phosphothreonine mark. Residues S906 and S909 each carry the phosphoserine modification. 2 disordered regions span residues 933–974 and 993–1019; these read ETEN…SRQL and WLHS…DDDG. Residues 999-1010 show a composition bias toward polar residues; it reads GRPSATSSPDQP. Positions 1029–1062 form a coiled coil; the sequence is QRLRQIESGHQQEVETLKKQVQELKSRLESQYLT. S1064 bears the Phosphoserine mark. An FYVE-type zinc finger spans residues 1119 to 1179; that stretch reads DHLAAHCYAC…VCKSCYSSLH (61 aa). Positions 1125, 1128, 1141, 1144, 1149, 1152, 1171, and 1174 each coordinate Zn(2+).

It belongs to the protein-tyrosine phosphatase family. Non-receptor class myotubularin subfamily. Forms heterodimers with MTMR4 that recruit both CEP55 and PLK1; occurs during early mitosis, regulates the phosphorylation of CEP55 by PLK1 and its recruitment to the midbody where it mediates cell abscission. In terms of processing, phosphorylated by CDK1 during mitosis.

It is found in the cytoplasm. The protein localises to the cytosol. It localises to the membrane. The catalysed reaction is a 1,2-diacyl-sn-glycero-3-phospho-(1D-myo-inositol-3,5-bisphosphate) + H2O = a 1,2-diacyl-sn-glycero-3-phospho-(1D-myo-inositol-5-phosphate) + phosphate. The enzyme catalyses a 1,2-diacyl-sn-glycero-3-phospho-(1D-myo-inositol-3-phosphate) + H2O = a 1,2-diacyl-sn-glycero-3-phospho-(1D-myo-inositol) + phosphate. It carries out the reaction 1,2-dihexadecanoyl-sn-glycero-3-phospho-(1D-myo-inositol-3-phosphate) + H2O = 1,2-dihexadecanoyl-sn-glycero-3-phospho-(1D-myo-inositol) + phosphate. It catalyses the reaction 1,2-dioctanoyl-sn-glycero-3-phospho-(1-D-myo-inositol-3-phosphate) + H2O = 1,2-dioctanoyl-sn-glycero-3-phospho-(1D-myo-inositol) + phosphate. The catalysed reaction is 1,2-dihexadecanoyl-sn-glycero-3-phospho-(1D-myo-inositol-3,5-phosphate) + H2O = 1,2-dihexadecanoyl-sn-glycero-3-phospho-(1D-myo-inositol-5-phosphate) + phosphate. In terms of biological role, lipid phosphatase that specifically dephosphorylates the D-3 position of phosphatidylinositol 3-phosphate and phosphatidylinositol 3,5-bisphosphate, generating phosphatidylinositol and phosphatidylinositol 5-phosphate. Decreases the levels of phosphatidylinositol 3-phosphate, a phospholipid found in cell membranes where it acts as key regulator of both cell signaling and intracellular membrane traffic. Could also have a molecular sequestering/adapter activity and regulate biological processes independently of its phosphatase activity. It includes the regulation of midbody abscission during mitotic cytokinesis. This chain is Phosphatidylinositol-3,5-bisphosphate 3-phosphatase MTMR3, found in Homo sapiens (Human).